The sequence spans 238 residues: Transcription factor PCL1 (238 aa).

The span at 71-90 (RLRRASSSSSSSFPAFASKG) shows a compositional bias: low complexity. Positions 71 to 119 (RLRRASSSSSSSFPAFASKGAGTGADEAESGGGADGGNGNTNNSSSKRA) are disordered. Gly residues predominate over residues 100-109 (SGGGADGGNG). Residues 115 to 174 (SSKRARLVWTPQLHKRFVEVVAHLGMKNAVPKTIMQLMNVEGLTRENVASHLQKYRLYVK) constitute a DNA-binding region (myb-like GARP).

It localises to the nucleus. Functionally, transcription factor that is essential for the generation of the circadian clock oscillation. Binds to specific sites on CCA1 promoter leading to CCA1 activation. In Oryza sativa subsp. japonica (Rice), this protein is Transcription factor PCL1 (PCL1).